The chain runs to 100 residues: uncharacterized protein (100 aa).

The tract at residues 1 to 86 is disordered; the sequence is MRGTRRGPSG…RHRPPEVTEP (86 aa). Residues 35–48 are compositionally biased toward pro residues; sequence DTPPPRAPPPPPPL.

This is an uncharacterized protein from Human herpesvirus 6A (strain Uganda-1102) (HHV-6 variant A).